The sequence spans 376 residues: Homeobox protein extradenticle (376 aa).

Residues 16–35 (APQGYSLSGQDDGQNTGNEN) are disordered. Positions 20 to 34 (YSLSGQDDGQNTGNE) are enriched in polar residues. A PBC domain is found at 38 to 237 (RKQKDIGEIL…VMILRSRFLD (200 aa)). Positions 45–124 (EILQQIMSIS…EGVAGPEKGG (80 aa)) are PBC-A. Residues 127–237 (AAAASAAAAS…VMILRSRFLD (111 aa)) are PBC-B. Residues 238 to 300 (ARRKRRNFSK…NKRIRYKKNI (63 aa)) constitute a DNA-binding region (homeobox; TALE-type). Over residues 318–335 (ASPYSMAGPPSGTTTPMM) the composition is skewed to low complexity. The tract at residues 318–376 (ASPYSMAGPPSGTTTPMMSPAPPQDSMGYTMGSGGYDQQQPYDNSMGGYDPNLHQDLSP) is disordered.

This sequence belongs to the TALE/PBX homeobox family. As to quaternary structure, interacts with Ubx and hth.

It localises to the nucleus. Transcription factor which acts with the selector homeodomain proteins altering the regulation of downstream target genes such as wingless (wg), teashirt (tsh) and decapentaplegic (dpp), thus affecting segmental identity. Delimits the eye field and prevent inappropriate eye development. Required for proper localization of chordotonal organs within the peripheral nervous system. In Drosophila pseudoobscura pseudoobscura (Fruit fly), this protein is Homeobox protein extradenticle.